The chain runs to 178 residues: Actin-related protein 2/3 complex subunit 3-A (178 aa).

It belongs to the ARPC3 family. In terms of assembly, component of the Arp2/3 complex composed of actr2/arp2, actr3/arp3, arpc1 (arpc1a or arpc1b), arpc2, arpc3, arpc4 and arpc5.

The protein resides in the cytoplasm. It localises to the cytoskeleton. It is found in the cell projection. The protein localises to the nucleus. Component of the Arp2/3 complex, a multiprotein complex that mediates actin polymerization upon stimulation by nucleation-promoting factor (NPF). The Arp2/3 complex mediates the formation of branched actin networks in the cytoplasm, providing the force for cell motility. In addition to its role in the cytoplasmic cytoskeleton, the Arp2/3 complex also promotes actin polymerization in the nucleus, thereby regulating gene transcription and repair of damaged DNA. The Arp2/3 complex promotes homologous recombination (HR) repair in response to DNA damage by promoting nuclear actin polymerization, leading to drive motility of double-strand breaks (DSBs). The chain is Actin-related protein 2/3 complex subunit 3-A (arpc3-a) from Xenopus laevis (African clawed frog).